The primary structure comprises 194 residues: Phosphoprotein p30 (194 aa).

It belongs to the asfivirus phosphoprotein p30 family. In terms of assembly, oligomer. Interacts with host HNRNPK. In terms of processing, phosphorylated on serine residues in the 115 N-terminal amino acids.

The protein localises to the host cytoplasm. It localises to the host nucleus. Its subcellular location is the virion. Its function is as follows. Modifies the subcellular distribution of heterogeneous nuclear ribonucleoprotein K (HNRNPK) and may contribute to modulate HNRNPK functions related to processing and export of mRNAs during ASFV infection. Necessary for virus internalization. This chain is Phosphoprotein p30, found in Ornithodoros (relapsing fever ticks).